Consider the following 1373-residue polypeptide: DNA-directed RNA polymerase subunit beta'' (1373 aa).

Zn(2+) contacts are provided by cysteine 220, cysteine 293, cysteine 300, and cysteine 303.

It belongs to the RNA polymerase beta' chain family. RpoC2 subfamily. As to quaternary structure, in plastids the minimal PEP RNA polymerase catalytic core is composed of four subunits: alpha, beta, beta', and beta''. When a (nuclear-encoded) sigma factor is associated with the core the holoenzyme is formed, which can initiate transcription. The cofactor is Zn(2+).

The protein resides in the plastid. Its subcellular location is the chloroplast. The catalysed reaction is RNA(n) + a ribonucleoside 5'-triphosphate = RNA(n+1) + diphosphate. Its function is as follows. DNA-dependent RNA polymerase catalyzes the transcription of DNA into RNA using the four ribonucleoside triphosphates as substrates. The protein is DNA-directed RNA polymerase subunit beta'' of Lepidium virginicum (Virginia pepperweed).